A 337-amino-acid chain; its full sequence is Basic membrane protein A1 (337 aa).

The first 17 residues, 1-17, serve as a signal peptide directing secretion; that stretch reads MNKLLLLILFECIIFLS. C18 carries the N-palmitoyl cysteine lipid modification. A lipid anchor (S-diacylglycerol cysteine) is attached at C18.

This sequence belongs to the BMP lipoprotein family. In terms of assembly, monomer.

It is found in the cell inner membrane. Its function is as follows. Immunogenic protein. May be part of an ABC-type nucleoside uptake system involved in the purine salvage pathway. The polypeptide is Basic membrane protein A1 (bmpA1) (Borrelia garinii subsp. bavariensis (strain ATCC BAA-2496 / DSM 23469 / PBi) (Borreliella bavariensis)).